The primary structure comprises 299 residues: tRNA uridine(34) hydroxylase (299 aa).

The Rhodanese domain occupies 132 to 226 (AGRPVVMLDT…YFEEVGGAHY (95 aa)). Residue cysteine 186 is the Cysteine persulfide intermediate of the active site.

It belongs to the TrhO family.

It catalyses the reaction uridine(34) in tRNA + AH2 + O2 = 5-hydroxyuridine(34) in tRNA + A + H2O. In terms of biological role, catalyzes oxygen-dependent 5-hydroxyuridine (ho5U) modification at position 34 in tRNAs. The protein is tRNA uridine(34) hydroxylase of Burkholderia pseudomallei (strain 1106a).